Reading from the N-terminus, the 134-residue chain is Small ribosomal subunit protein uS9 (134 aa).

The disordered stretch occupies residues 109–134 (DARRTEPHKPSKSSKGPRARRQKSYR). A compositionally biased stretch (basic residues) spans 118 to 134 (PSKSSKGPRARRQKSYR).

It belongs to the universal ribosomal protein uS9 family.

The protein is Small ribosomal subunit protein uS9 of Methanococcus vannielii (strain ATCC 35089 / DSM 1224 / JCM 13029 / OCM 148 / SB).